A 381-amino-acid polypeptide reads, in one-letter code: Arf-GAP with dual PH domain-containing protein 2 (381 aa).

In terms of domain architecture, Arf-GAP spans 9–132; the sequence is KRLLELLQAA…TAIDKAVSHP (124 aa). The C4-type zinc finger occupies 25-48; sequence CADCGAADPDWASYKLGIFICLHC. PH domains lie at 132–233 and 255–361; these read PGNR…AARL and NYLK…GVLS.

The protein localises to the cytoplasm. The protein resides in the cell membrane. GTPase-activating protein for the ADP ribosylation factor family (Potential). Binds phosphatidylinositol 3,4,5-trisphosphate (PtdInsP3) and inositol 1,3,4,5-tetrakisphosphate (InsP4). Possesses a stoichiometry of two binding sites for InsP4 with identical affinity. This chain is Arf-GAP with dual PH domain-containing protein 2 (Adap2), found in Mus musculus (Mouse).